The primary structure comprises 291 residues: Putative transport permease ycf38 (291 aa).

6 helical membrane-spanning segments follow: residues 47–67, 87–107, 135–155, 165–185, 195–215, and 262–282; these read ATLM…GGLF, SGII…PLMF, FMTC…LFMG, MIFG…SLAL, LLAF…ALAP, and ICLG…AYLV. The 243-residue stretch at 47–289 folds into the ABC transmembrane type-2 domain; it reads ATLMAGIIQP…YLVSNILKAK (243 aa).

Belongs to the ABC-2 integral membrane protein family.

The protein resides in the plastid. It is found in the chloroplast membrane. This is Putative transport permease ycf38 (ycf38) from Pyropia yezoensis (Susabi-nori).